A 289-amino-acid chain; its full sequence is Protein shisa-2 homolog (289 aa).

An N-terminal signal peptide occupies residues 1-27; that stretch reads MWAGCHPDAASLLRLLLAALLAAGALA. The Extracellular portion of the chain corresponds to 28–104; that stretch reads SGEYCHGWLD…RADKDGPDGS (77 aa). Positions 81–102 are disordered; that stretch reads GCDNDRQQGAGEPGRADKDGPD. The chain crosses the membrane as a helical span at residues 105 to 125; sequence AVPIYVPFLIVGSVFVAFIVL. Residues 126–289 are Cytoplasmic-facing; sequence GSLVAACCCR…EQKMYPAVTV (164 aa). The tract at residues 162–198 is disordered; the sequence is PSASTSRGSSSRQSSTAASSSSSANSGARAPPTRSQT. The span at 163–191 shows a compositional bias: low complexity; sequence SASTSRGSSSRQSSTAASSSSSANSGARA.

Belongs to the shisa family.

The protein resides in the endoplasmic reticulum membrane. Its function is as follows. Plays an essential role in the maturation of presomitic mesoderm cells by individual attenuation of both FGF and WNT signaling. In Bos taurus (Bovine), this protein is Protein shisa-2 homolog (SHISA2).